The chain runs to 1234 residues: Protein Jumonji (1234 aa).

Basic residues predominate over residues 1 to 11; the sequence is MSKERPKRNII. 4 disordered regions span residues 1–22, 68–150, 169–339, and 354–548; these read MSKE…DGIP, AKAL…LSKR, LPNS…VKYT, and RELV…GKSG. S78 carries the phosphoserine modification. Residues 86 to 98 show a composition bias toward low complexity; the sequence is SQVSSTSNDVSSS. Positions 104-110 match the Nuclear localization signal motif; the sequence is PSRKRPR. Residues 117-129 show a composition bias toward polar residues; sequence FAQSQPNSPSTTP. The tract at residues 141–170 is sufficient for interaction with the PRC2 complex; it reads ATQISDLSKRKPKTEDFLTFLCLRGSPALP. Residues 180 to 193 show a composition bias toward acidic residues; sequence QDEEDVEEEDDETE. The span at 197-210 shows a compositional bias: polar residues; the sequence is ATTNNASSSCQSTP. Residues 211 to 221 are compositionally biased toward basic residues; that stretch reads RKGKTHKHVHN. Residues 244–264 show a composition bias toward basic and acidic residues; it reads KEATPGKEKHSEPRADSRREQ. Over residues 265-285 the composition is skewed to low complexity; sequence ASGAQPTAASAAASSAKGLAA. Polar residues-rich tracts occupy residues 304 to 322 and 369 to 384; these read SKVN…TNSA and SAVN…SSNA. K378 bears the N6-acetyllysine mark. Positions 418 to 440 are enriched in basic and acidic residues; that stretch reads CTKEVGGRQLREGLRNSKRRLEE. Position 449 is a phosphoserine (S449). Basic and acidic residues-rich tracts occupy residues 482 to 494 and 529 to 544; these read VKKE…LERN and SSHK…EKGS. Residues 555-596 form the JmjN domain; the sequence is IPVLRPSAKEFHDPLIYIESVRAQVEKYGMCRVIPPPDWRPE. Residues 619–711 enclose the ARID domain; it reads WGPNVQRLAC…YLLSYDSLSP (93 aa). Positions 872 to 876 match the GSGFP motif motif; it reads GSGFP. The region spanning 882–1046 is the JmjC domain; sequence PFSRHGWNLT…MGFETAKEMK (165 aa). Residues 1206–1234 are disordered; the sequence is ENCLNKPTPKRGPRKRATVDVPPSRLPSS.

It belongs to the JARID2 family. In terms of assembly, associates with the PRC2 complex, which consists of the core components EED, EZH1 or EZH2, SUZ12, and RBBP4, and various combinations of accessory subunits including AEBP2, JARID2, PHF19, MTF2 and EPOP. Found in a monomeric PRC2.2 (class 2) complex consisting of at least SUZ12, RBBP4, AEBP2 and JARID2. Facilitates nucleosome binding of the PRC2 complex. Interacts with SUZ12 (via C2H2-type zinc finger domain); the interaction is direct; competes with EPOP for SUZ12 binding. Interacts with histone methyltransferases EHMT1/GLP1 and EHMT2/G9a. Interacts with GATA4 (via the N-terminal region). Interacts with NKX2-5 (via the C-terminal region). Interacts with RB1. Interacts with ZNF496. Interacts with ESRRB. Interacts with DDX18; this interaction inhibits the PRC2 complex. In terms of tissue distribution, widely expressed in embryos. In adults, expressed at high levels in heart, skeletal muscle, brain and thymus.

It is found in the nucleus. In terms of biological role, regulator of histone methyltransferase complexes that plays an essential role in embryonic development, including heart and liver development, neural tube fusion process and hematopoiesis. Acts as an accessory subunit for the core PRC2 (Polycomb repressive complex 2) complex, which mediates histone H3K27 (H3K27me3) trimethylation on chromatin. Binds DNA and mediates the recruitment of the PRC2 complex to target genes in embryonic stem cells, thereby playing a key role in stem cell differentiation and normal embryonic development. In cardiac cells, it is required to repress expression of cyclin-D1 (CCND1) by activating methylation of 'Lys-9' of histone H3 (H3K9me) by the GLP1/EHMT1 and G9a/EHMT2 histone methyltransferases. Also acts as a transcriptional repressor of ANF via its interaction with GATA4 and NKX2-5. Participates in the negative regulation of cell proliferation signaling. Does not have histone demethylase activity. The protein is Protein Jumonji (Jarid2) of Mus musculus (Mouse).